Here is an 85-residue protein sequence, read N- to C-terminus: Small ribosomal subunit protein bS16 (85 aa).

This sequence belongs to the bacterial ribosomal protein bS16 family.

This is Small ribosomal subunit protein bS16 from Acinetobacter baylyi (strain ATCC 33305 / BD413 / ADP1).